The primary structure comprises 101 residues: Large ribosomal subunit protein uL23 (101 aa).

Belongs to the universal ribosomal protein uL23 family. In terms of assembly, part of the 50S ribosomal subunit. Contacts protein L29, and trigger factor when it is bound to the ribosome.

Functionally, one of the early assembly proteins it binds 23S rRNA. One of the proteins that surrounds the polypeptide exit tunnel on the outside of the ribosome. Forms the main docking site for trigger factor binding to the ribosome. The sequence is that of Large ribosomal subunit protein uL23 from Corynebacterium kroppenstedtii (strain DSM 44385 / JCM 11950 / CIP 105744 / CCUG 35717).